The chain runs to 419 residues: Satellite RNA 48 kDa protein (419 aa).

Over residues 1-27 the composition is skewed to basic residues; it reads MQKTMTRHLSRNRKPHEKVSHVPRRGP. The tract at residues 1-66 is disordered; the sequence is MQKTMTRHLS…SLGRKPYNPG (66 aa).

It belongs to the nepovirus satellite RNA 48 kDa protein family.

This Allium porrum (Leek) protein is Satellite RNA 48 kDa protein.